A 272-amino-acid chain; its full sequence is Pyrroline-5-carboxylate reductase 3 (272 aa).

This sequence belongs to the pyrroline-5-carboxylate reductase family.

It is found in the cytoplasm. The enzyme catalyses L-proline + NADP(+) = (S)-1-pyrroline-5-carboxylate + NADPH + 2 H(+). It catalyses the reaction L-proline + NAD(+) = (S)-1-pyrroline-5-carboxylate + NADH + 2 H(+). It participates in amino-acid biosynthesis; L-proline biosynthesis; L-proline from L-glutamate 5-semialdehyde: step 1/1. Functionally, catalyzes the reduction of 1-pyrroline-5-carboxylate (PCA) to L-proline. This chain is Pyrroline-5-carboxylate reductase 3 (proG), found in Bacillus subtilis (strain 168).